Reading from the N-terminus, the 92-residue chain is UPF0250 protein VV0902 (92 aa).

It belongs to the UPF0250 family.

This is UPF0250 protein VV0902 from Vibrio vulnificus (strain YJ016).